The primary structure comprises 291 residues: tRNA U34 carboxymethyltransferase (291 aa).

Residues lysine 61, tryptophan 75, lysine 80, glycine 100, 122–124, 149–150, tyrosine 169, and arginine 284 each bind carboxy-S-adenosyl-L-methionine; these read DPS and VE.

It belongs to the class I-like SAM-binding methyltransferase superfamily. CmoB family. Homotetramer.

It carries out the reaction carboxy-S-adenosyl-L-methionine + 5-hydroxyuridine(34) in tRNA = 5-carboxymethoxyuridine(34) in tRNA + S-adenosyl-L-homocysteine + H(+). Its function is as follows. Catalyzes carboxymethyl transfer from carboxy-S-adenosyl-L-methionine (Cx-SAM) to 5-hydroxyuridine (ho5U) to form 5-carboxymethoxyuridine (cmo5U) at position 34 in tRNAs. The sequence is that of tRNA U34 carboxymethyltransferase from Campylobacter jejuni subsp. jejuni serotype O:6 (strain 81116 / NCTC 11828).